Here is a 348-residue protein sequence, read N- to C-terminus: Small ribosomal subunit biogenesis GTPase RsgA (348 aa).

Over residues 1–14 (MAKRKLSKQQKWRI) the composition is skewed to basic residues. Positions 1–39 (MAKRKLSKQQKWRIQKIQDERTKRATRKETQLESQLSGG) are disordered. Residues 16 to 31 (KIQDERTKRATRKETQ) are compositionally biased toward basic and acidic residues. Residues 116–275 (FGQLKPIAAN…LIDSPGIREF (160 aa)) form the CP-type G domain. GTP is bound by residues 163–166 (NKQD) and 217–225 (GQSGVGKSS). Positions 299, 304, 306, and 312 each coordinate Zn(2+).

Belongs to the TRAFAC class YlqF/YawG GTPase family. RsgA subfamily. Monomer. Associates with 30S ribosomal subunit, binds 16S rRNA. It depends on Zn(2+) as a cofactor.

It is found in the cytoplasm. Functionally, one of several proteins that assist in the late maturation steps of the functional core of the 30S ribosomal subunit. Helps release RbfA from mature subunits. May play a role in the assembly of ribosomal proteins into the subunit. Circularly permuted GTPase that catalyzes slow GTP hydrolysis, GTPase activity is stimulated by the 30S ribosomal subunit. This is Small ribosomal subunit biogenesis GTPase RsgA from Hahella chejuensis (strain KCTC 2396).